We begin with the raw amino-acid sequence, 314 residues long: Olfactory receptor 5P68 (314 aa).

The Extracellular portion of the chain corresponds to 1–28 (MAFLHNGNHTAVTEFILLGLTDDPVFRV). An N-linked (GlcNAc...) asparagine glycan is attached at Asn8. Residues 29–49 (ILFTIILCIYLVTVSGNLSTI) form a helical membrane-spanning segment. Topologically, residues 50 to 57 (LLIRVSSQ) are cytoplasmic. Residues 58-78 (LHHPMYFFLSHLASVDIGYSS) traverse the membrane as a helical segment. At 79–102 (SVTPNMLANFLVEKNTISYLGCTI) the chain is on the extracellular side. Cys100 and Cys192 are oxidised to a cystine. The helical transmembrane segment at 103 to 123 (QLSLAAFCGTVECFLLATMAY) threads the bilayer. Topologically, residues 124 to 136 (DRFMAICSPLLYS) are cytoplasmic. A helical membrane pass occupies residues 137–157 (TKMSTQVCIQLIVGSYIGGFL). Over 158 to 199 (NASSFTLFFLSFLFCGPNRINHFYCDFAPLVALSCSDVSVSE) the chain is Extracellular. The helical transmembrane segment at 200 to 220 (VVTSFFSGSVTMITMLVIAIS) threads the bilayer. Over 221 to 240 (YTYILITILKMRSTEGRHKA) the chain is Cytoplasmic. The chain crosses the membrane as a helical span at residues 241 to 261 (FSTCTSHLTAVTLFYGTITFI). Residues 262–274 (YVMPKSSFSTDQN) lie on the Extracellular side of the membrane. The helical transmembrane segment at 275–295 (KVVSVFYMVVIPMLNPLIYSL) threads the bilayer. Topologically, residues 296–314 (RNNEIKDALKRHLGKKIFS) are cytoplasmic.

The protein belongs to the G-protein coupled receptor 1 family.

The protein resides in the cell membrane. Its function is as follows. Potential odorant receptor. This is Olfactory receptor 5P68 from Mus musculus (Mouse).